The following is a 424-amino-acid chain: Elongation factor 1-alpha (424 aa).

The 219-residue stretch at 5–223 (KPHLNLAFIG…NALKEPQKPV (219 aa)) folds into the tr-type G domain. A G1 region spans residues 14-21 (GHVDHGKS). 14-21 (GHVDHGKS) is a GTP binding site. Residue Ser21 participates in Mg(2+) binding. Positions 70-74 (GVTID) are G2. A G3 region spans residues 91–94 (DCPG). GTP-binding positions include 91 to 95 (DCPGH) and 146 to 149 (NKMD). Residues 146-149 (NKMD) form a G4 region. Positions 187-189 (SAY) are G5.

Belongs to the TRAFAC class translation factor GTPase superfamily. Classic translation factor GTPase family. EF-Tu/EF-1A subfamily.

Its subcellular location is the cytoplasm. It catalyses the reaction GTP + H2O = GDP + phosphate + H(+). GTP hydrolase that promotes the GTP-dependent binding of aminoacyl-tRNA to the A-site of ribosomes during protein biosynthesis. This chain is Elongation factor 1-alpha, found in Methanothrix thermoacetophila (strain DSM 6194 / JCM 14653 / NBRC 101360 / PT) (Methanosaeta thermophila).